The chain runs to 620 residues: UDP-glucose:protein N-beta-glucosyltransferase (620 aa).

It belongs to the glycosyltransferase 41 family. Does not require a metal cofactor. is required as a cofactor.

The protein localises to the cytoplasm. It carries out the reaction L-asparaginyl-[protein] + UDP-alpha-D-glucose = N(4)-(beta-D-glucosyl)-L-asparaginyl-[protein] + UDP + H(+). Its pathway is protein modification; protein glycosylation. In terms of biological role, inverting glycosyltransferase that catalyzes the transfer of one glucose moiety from UDP-glucose to an asparagine residue in peptides and proteins containing the NX(S/T) motif, resulting in their modification with a beta-linked 1,N-glucose. Likely acts as a key component of a general protein glycosylation system. Also accepts UDP-galactose as a substrate donor, albeit with low efficiency. Cannot use UDP-GlcNAc or UDP-GalNAc as substrate donor. The polypeptide is UDP-glucose:protein N-beta-glucosyltransferase (Actinobacillus pleuropneumoniae serotype 7 (strain AP76)).